The primary structure comprises 101 residues: Ascorbate-specific PTS system EIIB component (101 aa).

A PTS EIIB type-2 domain is found at 3-96 (VRILAVCGNG…KLLEVIKEHF (94 aa)). Residue Cys-9 is the Phosphocysteine intermediate of the active site. At Cys-9 the chain carries Phosphocysteine.

The protein resides in the cytoplasm. The catalysed reaction is N(pros)-phospho-L-histidyl-[protein] + L-ascorbate(out) = L-ascorbate 6-phosphate(in) + L-histidyl-[protein]. Functionally, the phosphoenolpyruvate-dependent sugar phosphotransferase system (sugar PTS), a major carbohydrate active transport system, catalyzes the phosphorylation of incoming sugar substrates concomitantly with their translocation across the cell membrane. The enzyme II UlaABC PTS system is involved in ascorbate transport. The chain is Ascorbate-specific PTS system EIIB component (ulaB) from Salmonella choleraesuis (strain SC-B67).